Consider the following 367-residue polypeptide: Large ribosomal subunit protein mL38 (367 aa).

A mitochondrion-targeting transit peptide spans 1–29; the sequence is MLRRSIHTTKILQKPNATSHIWSDFTTRP.

It belongs to the phosphatidylethanolamine-binding protein family. Mitochondrion-specific ribosomal protein mL38 subfamily. Component of the mitochondrial large ribosomal subunit (mt-LSU). Mature yeast 74S mitochondrial ribosomes consist of a small (37S) and a large (54S) subunit. The 37S small subunit contains a 15S ribosomal RNA (15S mt-rRNA) and 34 different proteins. The 54S large subunit contains a 21S rRNA (21S mt-rRNA) and 46 different proteins.

Its subcellular location is the mitochondrion. In terms of biological role, component of the mitochondrial ribosome (mitoribosome), a dedicated translation machinery responsible for the synthesis of mitochondrial genome-encoded proteins, including at least some of the essential transmembrane subunits of the mitochondrial respiratory chain. The mitoribosomes are attached to the mitochondrial inner membrane and translation products are cotranslationally integrated into the membrane. The chain is Large ribosomal subunit protein mL38 (MRPL35) from Saccharomyces cerevisiae (strain ATCC 204508 / S288c) (Baker's yeast).